The following is an 83-amino-acid chain: Short neurotoxin OKI-Ed (83 aa).

The N-terminal stretch at 1–21 (MKTLLLTLVVVTIVCLDLGYT) is a signal peptide. Intrachain disulfides connect Cys-24/Cys-45, Cys-38/Cys-62, Cys-64/Cys-75, and Cys-76/Cys-81.

It belongs to the three-finger toxin family. Short-chain subfamily. Type I alpha-neurotoxin sub-subfamily. Expressed by the venom gland.

Its subcellular location is the secreted. In terms of biological role, binds to muscle nicotinic acetylcholine receptor (nAChR) and inhibit acetylcholine from binding to the receptor, thereby impairing neuromuscular transmission. In Laticauda semifasciata (Black-banded sea krait), this protein is Short neurotoxin OKI-Ed.